Reading from the N-terminus, the 758-residue chain is 5-methyltetrahydropteroyltriglutamate--homocysteine methyltransferase (758 aa).

Residues 17 to 20 (RELK) and lysine 110 contribute to the 5-methyltetrahydropteroyltri-L-glutamate site. Residues 428–430 (IGS) and glutamate 481 contribute to the L-homocysteine site. L-methionine contacts are provided by residues 428 to 430 (IGS) and glutamate 481. Residues 512–513 (RC) and tryptophan 558 contribute to the 5-methyltetrahydropteroyltri-L-glutamate site. Aspartate 596 is a binding site for L-homocysteine. Residue aspartate 596 participates in L-methionine binding. Residue glutamate 602 participates in 5-methyltetrahydropteroyltri-L-glutamate binding. 3 residues coordinate Zn(2+): histidine 638, cysteine 640, and glutamate 662. The active-site Proton donor is the histidine 691. Cysteine 723 contributes to the Zn(2+) binding site.

It belongs to the vitamin-B12 independent methionine synthase family. Zn(2+) is required as a cofactor.

The enzyme catalyses 5-methyltetrahydropteroyltri-L-glutamate + L-homocysteine = tetrahydropteroyltri-L-glutamate + L-methionine. The protein operates within amino-acid biosynthesis; L-methionine biosynthesis via de novo pathway; L-methionine from L-homocysteine (MetE route): step 1/1. Its function is as follows. Catalyzes the transfer of a methyl group from 5-methyltetrahydrofolate to homocysteine resulting in methionine formation. In Thermosynechococcus vestitus (strain NIES-2133 / IAM M-273 / BP-1), this protein is 5-methyltetrahydropteroyltriglutamate--homocysteine methyltransferase.